The primary structure comprises 563 residues: IQCJ-SCHIP1 readthrough transcript protein (563 aa).

Residues 47–67 (ESKVKIIQRAWREYLQRQEPL) enclose the IQ domain. Disordered regions lie at residues 63–150 (RQEP…VSAL), 164–295 (VIDE…EPPV), 312–336 (FREQEVRNQGQARTNSTSAQKNERE), and 384–430 (SGSD…SLDD). Over residues 76–87 (SVSSEKLSSSVS) the composition is skewed to low complexity. A compositionally biased stretch (polar residues) spans 88–97 (MNTFSDSSTP). The segment covering 108 to 143 (SDAGSSSSSSRASSQSNSTKVTPCSECKSSSSPGGS) has biased composition (low complexity). Acidic residues predominate over residues 168-182 (WAPEEDGEEEEEEDE). Basic and acidic residues-rich tracts occupy residues 183–199 (RDQRGYRDDRSPAREPG) and 229–238 (HQHDPQDLRH). Ser-193 is subject to Phosphoserine. Residues 318-331 (RNQGQARTNSTSAQ) show a composition bias toward polar residues. Positions 385 to 399 (GSDKDSDADDSKTET) are enriched in basic and acidic residues. Polar residues predominate over residues 400 to 411 (SLDTPLSPMSKQ). The interval 419–563 (DTTEEESESL…KHMAEKMPAK (145 aa)) is required for interaction with ankyrins. Over residues 420–430 (TTEEESESLDD) the composition is skewed to acidic residues. The stretch at 500–534 (IGQLQVIVNDLHSQIESLNEELVQLLLIRDELHTE) forms a coiled coil.

As to quaternary structure, homooligomer (via coiled coil domain). Interacts (via IQ domain) with calmodulin; the interaction is direct and lost in presence of calcium. Interacts with ANK3 (via ANK repeats); required for localization at axon initial segments (AIS) and nodes of Ranvier. Interacts with SPTBN4. Interacts with KCNQ2 and KCNQ3. As to expression, highly expressed in brain and to a lower extent in heart and kidney.

The protein localises to the cell projection. Its subcellular location is the axon. It is found in the cytoplasm. Its function is as follows. May play a role in action potential conduction in myelinated cells through the organization of molecular complexes at nodes of Ranvier and axon initial segments. May also play a role in axon outgrowth and guidance. In Homo sapiens (Human), this protein is IQCJ-SCHIP1 readthrough transcript protein.